Consider the following 129-residue polypeptide: MLMDPVADMLTRVRNAQRVGRSFVIMPSSNQKKAIAEVLKEEGYIQSFEIKGDKKPELTIYLKYYQGRPVIETIKRVSRPGLRIFRNKDQLPRVQSGLGIAIISTSKGVMSDHKARELGVGGEVICMVA.

This sequence belongs to the universal ribosomal protein uS8 family. As to quaternary structure, part of the 30S ribosomal subunit. Contacts proteins S5 and S12.

In terms of biological role, one of the primary rRNA binding proteins, it binds directly to 16S rRNA central domain where it helps coordinate assembly of the platform of the 30S subunit. The sequence is that of Small ribosomal subunit protein uS8 from Dichelobacter nodosus (strain VCS1703A).